Here is a 407-residue protein sequence, read N- to C-terminus: Putative two-component response regulator ARR19 (407 aa).

The region spanning 35 to 150 (NVLVVDTNFT…VMANIWQHIV (116 aa)) is the Response regulatory domain. Aspartate 86 carries the 4-aspartylphosphate modification. The short motif at 214–217 (RKPR) is the Nuclear localization signal element. The myb-like GARP DNA-binding region spans 217–271 (RMTWTEELHQKFLEAIEIIGGIEKANPKVLVECLQEMRIEGITRSNVASHLQKHR).

The protein belongs to the ARR family. Type-B subfamily. Binds the target DNA as a monomer. In terms of processing, two-component system major event consists of a His-to-Asp phosphorelay between a sensor histidine kinase (HK) and a response regulator (RR). In plants, the His-to-Asp phosphorelay involves an additional intermediate named Histidine-containing phosphotransfer protein (HPt). This multistep phosphorelay consists of a His-Asp-His-Asp sequential transfer of a phosphate group between first a His and an Asp of the HK protein, followed by the transfer to a conserved His of the HPt protein and finally the transfer to an Asp in the receiver domain of the RR protein. As to expression, detected in trichomes and siliques.

Its subcellular location is the nucleus. In terms of biological role, putative transcriptional activator that binds specifically to the DNA sequence 5'-[AG]GATT-3'. Functions as a response regulator involved in His-to-Asp phosphorelay signal transduction system. Phosphorylation of the Asp residue in the receiver domain activates the ability of the protein to promote the transcription of target genes. Could directly activate some type-A response regulators in response to cytokinins. In Arabidopsis thaliana (Mouse-ear cress), this protein is Putative two-component response regulator ARR19 (ARR19).